Consider the following 227-residue polypeptide: Cytochrome c oxidase subunit 2 (227 aa).

The Mitochondrial intermembrane segment spans residues 1 to 14 (MAYPFELGFQDATS). A helical membrane pass occupies residues 15–45 (PIMEELLHFHDHTLMIVFLISSLVLYIISLM). Topologically, residues 46–59 (LTTKLTHTSTMDAQ) are mitochondrial matrix. The chain crosses the membrane as a helical span at residues 60–87 (EIETIWTILPAIILILIALPSLRILYMM). The Mitochondrial intermembrane segment spans residues 88-227 (DEINDPSLTV…HFENWSSSML (140 aa)). Cu cation is bound by residues His161, Cys196, Glu198, Cys200, His204, and Met207. Residue Glu198 coordinates Mg(2+).

This sequence belongs to the cytochrome c oxidase subunit 2 family. As to quaternary structure, component of the cytochrome c oxidase (complex IV, CIV), a multisubunit enzyme composed of 14 subunits. The complex is composed of a catalytic core of 3 subunits MT-CO1, MT-CO2 and MT-CO3, encoded in the mitochondrial DNA, and 11 supernumerary subunits COX4I, COX5A, COX5B, COX6A, COX6B, COX6C, COX7A, COX7B, COX7C, COX8 and NDUFA4, which are encoded in the nuclear genome. The complex exists as a monomer or a dimer and forms supercomplexes (SCs) in the inner mitochondrial membrane with NADH-ubiquinone oxidoreductase (complex I, CI) and ubiquinol-cytochrome c oxidoreductase (cytochrome b-c1 complex, complex III, CIII), resulting in different assemblies (supercomplex SCI(1)III(2)IV(1) and megacomplex MCI(2)III(2)IV(2)). Found in a complex with TMEM177, COA6, COX18, COX20, SCO1 and SCO2. Interacts with TMEM177 in a COX20-dependent manner. Interacts with COX20. Interacts with COX16. It depends on Cu cation as a cofactor.

Its subcellular location is the mitochondrion inner membrane. It catalyses the reaction 4 Fe(II)-[cytochrome c] + O2 + 8 H(+)(in) = 4 Fe(III)-[cytochrome c] + 2 H2O + 4 H(+)(out). Component of the cytochrome c oxidase, the last enzyme in the mitochondrial electron transport chain which drives oxidative phosphorylation. The respiratory chain contains 3 multisubunit complexes succinate dehydrogenase (complex II, CII), ubiquinol-cytochrome c oxidoreductase (cytochrome b-c1 complex, complex III, CIII) and cytochrome c oxidase (complex IV, CIV), that cooperate to transfer electrons derived from NADH and succinate to molecular oxygen, creating an electrochemical gradient over the inner membrane that drives transmembrane transport and the ATP synthase. Cytochrome c oxidase is the component of the respiratory chain that catalyzes the reduction of oxygen to water. Electrons originating from reduced cytochrome c in the intermembrane space (IMS) are transferred via the dinuclear copper A center (CU(A)) of subunit 2 and heme A of subunit 1 to the active site in subunit 1, a binuclear center (BNC) formed by heme A3 and copper B (CU(B)). The BNC reduces molecular oxygen to 2 water molecules using 4 electrons from cytochrome c in the IMS and 4 protons from the mitochondrial matrix. In Tamias townsendii (Townsend's chipmunk), this protein is Cytochrome c oxidase subunit 2 (MT-CO2).